The following is a 458-amino-acid chain: Protochlorophyllide reductase, chloroplastic (458 aa).

It belongs to the short-chain dehydrogenases/reductases (SDR) family. POR subfamily.

It is found in the plastid. The protein localises to the chloroplast. The enzyme catalyses chlorophyllide a + NADP(+) = protochlorophyllide a + NADPH + H(+). Its pathway is porphyrin-containing compound metabolism; chlorophyll biosynthesis. Its function is as follows. Phototransformation of protochlorophyllide (Pchlide) to chlorophyllide (Chlide). This chain is Protochlorophyllide reductase, chloroplastic (PORA), found in Marchantia paleacea (Liverwort).